Consider the following 908-residue polypeptide: DNA mismatch repair protein MutS (908 aa).

629 to 636 serves as a coordination point for ATP; the sequence is GPNMAGKS. The tract at residues 822 to 863 is disordered; that stretch reads ADEADGAPSEDPPSEDPPSGDGVRAKKGEADAVPDLEDSQAN.

This sequence belongs to the DNA mismatch repair MutS family.

In terms of biological role, this protein is involved in the repair of mismatches in DNA. It is possible that it carries out the mismatch recognition step. This protein has a weak ATPase activity. The polypeptide is DNA mismatch repair protein MutS (Salinibacter ruber (strain DSM 13855 / M31)).